Consider the following 170-residue polypeptide: uncharacterized protein (170 aa).

3 helical membrane passes run 31 to 51 (ILAVVNGSITIILSIIVFYIF), 58 to 78 (LFLITAGILTVFVFLYGLLLF), and 133 to 153 (IDFIVMIGMITISVIVVMLLF).

It to M.jannaschii MJ0554 and MJ0587.

The protein localises to the cell membrane. This is an uncharacterized protein from Methanocaldococcus jannaschii (strain ATCC 43067 / DSM 2661 / JAL-1 / JCM 10045 / NBRC 100440) (Methanococcus jannaschii).